The primary structure comprises 292 residues: ATP synthase gamma chain (292 aa).

This sequence belongs to the ATPase gamma chain family. In terms of assembly, F-type ATPases have 2 components, CF(1) - the catalytic core - and CF(0) - the membrane proton channel. CF(1) has five subunits: alpha(3), beta(3), gamma(1), delta(1), epsilon(1). CF(0) has three main subunits: a, b and c.

Its subcellular location is the cell membrane. Functionally, produces ATP from ADP in the presence of a proton gradient across the membrane. The gamma chain is believed to be important in regulating ATPase activity and the flow of protons through the CF(0) complex. This is ATP synthase gamma chain from Streptococcus mutans serotype c (strain ATCC 700610 / UA159).